We begin with the raw amino-acid sequence, 222 residues long: 3-dehydroquinate dehydratase (222 aa).

3-dehydroquinate-binding positions include 29 to 31 (ELR) and R55. Catalysis depends on H112, which acts as the Proton donor/acceptor. Catalysis depends on K139, which acts as the Schiff-base intermediate with substrate. R178, S199, and Q203 together coordinate 3-dehydroquinate.

Belongs to the type-I 3-dehydroquinase family. In terms of assembly, homodimer.

The catalysed reaction is 3-dehydroquinate = 3-dehydroshikimate + H2O. It participates in metabolic intermediate biosynthesis; chorismate biosynthesis; chorismate from D-erythrose 4-phosphate and phosphoenolpyruvate: step 3/7. Its function is as follows. Involved in the third step of the chorismate pathway, which leads to the biosynthesis of aromatic amino acids. Catalyzes the cis-dehydration of 3-dehydroquinate (DHQ) and introduces the first double bond of the aromatic ring to yield 3-dehydroshikimate. The chain is 3-dehydroquinate dehydratase from Dehalococcoides mccartyi (strain ATCC BAA-2266 / KCTC 15142 / 195) (Dehalococcoides ethenogenes (strain 195)).